The chain runs to 204 residues: Large ribosomal subunit protein uL22m (204 aa).

The N-terminal 27 residues, 1 to 27 (MAASITASVWGTLLKIHRGLTASGCLP), are a transit peptide targeting the mitochondrion.

It belongs to the universal ribosomal protein uL22 family. Component of the mitochondrial ribosome large subunit (39S) which comprises a 16S rRNA and about 50 distinct proteins.

The protein resides in the mitochondrion. This is Large ribosomal subunit protein uL22m (mrpl22) from Xenopus tropicalis (Western clawed frog).